Consider the following 250-residue polypeptide: MGRVNDKVVLVTGGAMGMGLTHCTLLAREGATVYLSDMNEELGHQAVAEIRRQGGKAHFLHLDVTNENHWTGAVDTILAESDRLDALVNNAGILTLKPVQDTSNEEWDRIFEINVRSVFLGTRAVIEPMRKAHKGCIVNVSSIYGLVGAPGAAAYEASKGAVRLFTKACAVDLAPFNIRVNSVHPGVIATPMTQQILDAPQSARALLGPTLLGRAAQPMEVSQAVLFLVSDEASFVHGSELVVDGGYTAN.

NAD(+) contacts are provided by Met-18, Asp-37, Asp-63, Val-64, Asn-90, Tyr-155, Lys-159, Ile-188, Thr-190, and Thr-193. Residue Tyr-155 is the Proton acceptor of the active site.

This sequence belongs to the short-chain dehydrogenases/reductases (SDR) family.

It catalyses the reaction cyclopentanol + NAD(+) = cyclopentanone + NADH + H(+). The enzyme catalyses cyclohexanol + NAD(+) = cyclohexanone + NADH + H(+). Its pathway is alcohol metabolism; cyclopentanol degradation; 5-valerolactone from cyclopentanol: step 1/2. Functionally, catalyzes the oxidation of cyclopentanol to cyclopentanone and cyclohexanol to cyclohexanone. The activity toward cyclohexanol is 60% that of cyclopentanol. The protein is Cyclopentanol dehydrogenase of Comamonas sp. (strain NCIMB 9872).